The sequence spans 1278 residues: ABC transporter B family member 11 (1278 aa).

2 stretches are compositionally biased toward basic and acidic residues: residues 1–13 and 21–35; these read MNGD…DSVS and SPKE…EKSE. A disordered region spans residues 1 to 35; that stretch reads MNGDGAREGDSVSHEPSTSKSPKEGEETKKEEKSE. 6 helical membrane passes run 55–75, 106–126, 182–202, 205–225, 285–305, and 314–334; these read VLLM…LPFM, FVYL…CWMI, FIQL…KGWL, LVML…ALIV, GLGL…AIWF, and GYTG…SMSL. Positions 58 to 346 constitute an ABC transmembrane type-1 1 domain; sequence MICGSIGAIG…TSPCVTAFAA (289 aa). The ABC transporter 1 domain maps to 381-617; the sequence is IELKDVHFSY…SEGAYSQLIR (237 aa). Residue 416–423 participates in ATP binding; the sequence is GESGSGKS. N-linked (GlcNAc...) asparagine glycosylation is found at Asn483, Asn568, and Asn653. Residues 629–654 are compositionally biased toward polar residues; sequence ELSSGSSFRNSNLKKSMEGTSSVGNS. Residues 629–656 are disordered; that stretch reads ELSSGSSFRNSNLKKSMEGTSSVGNSSR. An ABC transmembrane type-1 2 domain is found at 710–997; sequence LLLGTVAAAI…SSTFAPDSSK (288 aa). A run of 2 helical transmembrane segments spans residues 711–731 and 751–771; these read LLGT…GILI and FWAI…PTQM. Residue Asn806 is glycosylated (N-linked (GlcNAc...) asparagine). The next 4 helical transmembrane spans lie at 824 to 844, 845 to 865, 932 to 952, and 971 to 991; these read ALVG…ASGL, IIAF…LPLI, GFIS…VYAT, and VFQV…SSTF. Residues 1032-1271 enclose the ABC transporter 2 domain; sequence IELRHLSFTY…EGGVYASLVQ (240 aa). Residue 1067 to 1074 coordinates ATP; it reads GESGSGKS. N-linked (GlcNAc...) asparagine glycans are attached at residues Asn1121 and Asn1222.

The protein belongs to the ABC transporter superfamily. ABCB family. Multidrug resistance exporter (TC 3.A.1.201) subfamily. Present in roots and flower buds.

The protein resides in the membrane. It catalyses the reaction (indol-3-yl)acetate(in) + ATP + H2O = (indol-3-yl)acetate(out) + ADP + phosphate + H(+). In terms of biological role, involved in the regulation of auxin transport required for pistil elongation. This is ABC transporter B family member 11 from Arabidopsis thaliana (Mouse-ear cress).